Here is a 320-residue protein sequence, read N- to C-terminus: ATP-dependent 6-phosphofructokinase (320 aa).

Gly-12 provides a ligand contact to ATP. ADP contacts are provided by residues 22–26 (RGVVR) and 55–60 (RYSVSD). Residues 73–74 (RF) and 103–106 (GDGS) contribute to the ATP site. Asp-104 serves as a coordination point for Mg(2+). 126 to 128 (TID) is a binding site for substrate. Asp-128 functions as the Proton acceptor in the catalytic mechanism. Arg-155 lines the ADP pocket. Substrate-binding positions include Arg-163 and 170–172 (MGR). ADP is bound by residues 186–188 (GCE), Lys-212, and 214–216 (KKH). Substrate contacts are provided by residues Glu-223, Arg-244, and 250-253 (HIQR).

It belongs to the phosphofructokinase type A (PFKA) family. ATP-dependent PFK group I subfamily. Prokaryotic clade 'B1' sub-subfamily. As to quaternary structure, homotetramer. Mg(2+) serves as cofactor.

It is found in the cytoplasm. The catalysed reaction is beta-D-fructose 6-phosphate + ATP = beta-D-fructose 1,6-bisphosphate + ADP + H(+). Its pathway is carbohydrate degradation; glycolysis; D-glyceraldehyde 3-phosphate and glycerone phosphate from D-glucose: step 3/4. Its activity is regulated as follows. Allosterically activated by ADP and other diphosphonucleosides, and allosterically inhibited by phosphoenolpyruvate. Functionally, catalyzes the phosphorylation of D-fructose 6-phosphate to fructose 1,6-bisphosphate by ATP, the first committing step of glycolysis. The polypeptide is ATP-dependent 6-phosphofructokinase (Salmonella gallinarum (strain 287/91 / NCTC 13346)).